A 158-amino-acid chain; its full sequence is Transcription elongation factor GreA (158 aa).

The protein belongs to the GreA/GreB family.

In terms of biological role, necessary for efficient RNA polymerase transcription elongation past template-encoded arresting sites. The arresting sites in DNA have the property of trapping a certain fraction of elongating RNA polymerases that pass through, resulting in locked ternary complexes. Cleavage of the nascent transcript by cleavage factors such as GreA or GreB allows the resumption of elongation from the new 3'terminus. GreA releases sequences of 2 to 3 nucleotides. The protein is Transcription elongation factor GreA of Methylobacterium nodulans (strain LMG 21967 / CNCM I-2342 / ORS 2060).